The sequence spans 933 residues: Protein translocase subunit SecA (933 aa).

Residues glutamine 87, glycine 105–threonine 109, and aspartate 515 contribute to the ATP site. Disordered stretches follow at residues glutamate 567–serine 588, aspartate 840–alanine 861, and alanine 880–leucine 933. The span at glutamate 845 to glutamine 856 shows a compositional bias: basic and acidic residues. Low complexity predominate over residues alanine 880 to alanine 897. Over residues valine 905 to arginine 914 the composition is skewed to basic and acidic residues. Residues cysteine 918, cysteine 920, cysteine 929, and cysteine 930 each contribute to the Zn(2+) site. Positions lysine 924–leucine 933 are enriched in basic residues.

This sequence belongs to the SecA family. As to quaternary structure, monomer and homodimer. Part of the essential Sec protein translocation apparatus which comprises SecA, SecYEG and auxiliary proteins SecDF-YajC and YidC. Zn(2+) is required as a cofactor.

The protein resides in the cell inner membrane. Its subcellular location is the cytoplasm. It catalyses the reaction ATP + H2O + cellular proteinSide 1 = ADP + phosphate + cellular proteinSide 2.. In terms of biological role, part of the Sec protein translocase complex. Interacts with the SecYEG preprotein conducting channel. Has a central role in coupling the hydrolysis of ATP to the transfer of proteins into and across the cell membrane, serving both as a receptor for the preprotein-SecB complex and as an ATP-driven molecular motor driving the stepwise translocation of polypeptide chains across the membrane. The protein is Protein translocase subunit SecA of Halorhodospira halophila (strain DSM 244 / SL1) (Ectothiorhodospira halophila (strain DSM 244 / SL1)).